Consider the following 1062-residue polypeptide: Exportin-T (1062 aa).

This sequence belongs to the exportin family.

It localises to the nucleus. It is found in the cytoplasm. In terms of biological role, tRNA nucleus export receptor which facilitates tRNA translocation across the nuclear pore complex. Involved in pre-tRNA splicing, probably by affecting the interaction of pre-tRNA with splicing endonuclease. The protein is Exportin-T (LOS1) of Vanderwaltozyma polyspora (strain ATCC 22028 / DSM 70294 / BCRC 21397 / CBS 2163 / NBRC 10782 / NRRL Y-8283 / UCD 57-17) (Kluyveromyces polysporus).